A 507-amino-acid polypeptide reads, in one-letter code: MAEEQARHVKNGLECIRALKAEPIGSLAIEEAMAAWSEISDNPGQERATCREEKAGSSGLSKPCLSAIGSTEGGAPRIRGQGPGESDDDAETLGIPPRNLQASSTGLQCYYVYDHSGEAVKGIQDADSIMVQSGLDGDSTLSGGDNESENSDVDIGEPDTEGYAITDRGSAPISMGFRASDVETAEGGEIHELLRLQSRGNNFPKLGKTLNVPPPPDPGRASTSGTPIKKGTERRLASFGTEIASLLTGGATQCARKSPSEPSGPGAPAGNVPECVSNAALIQEWTPESGTTISPRSQNNEEGGDYYDDELFSDVQDIKTALAKIHEDNQKIISKLESLLLLKGEVESIKKQINRQNISISTLEGHLSSIMIAIPGLGKDPNDPTADVEINPDLKPIIGRDSGRALAEVLKKPVASRQLQGMTNGRTSSRGQLLKEFQLKPIGKKMSSAVGFVPDTGPASRSVIRSIIKSSRLEEDRKRYLMTLLDDIKGANDLAKFHQMLMKIIMK.

The tract at residues 1–48 (MAEEQARHVKNGLECIRALKAEPIGSLAIEEAMAAWSEISDNPGQERA) is interaction with N0. Disordered regions lie at residues 41–99 (DNPG…PPRN), 134–163 (GLDG…TEGY), 201–231 (NNFP…IKKG), and 250–273 (GATQ…GNVP). S86 bears the Phosphoserine mark. Low complexity predominate over residues 134-145 (GLDGDSTLSGGD). Over residues 146–160 (NESENSDVDIGEPDT) the composition is skewed to acidic residues. Position 151 is a phosphoserine (S151). Residues 260–270 (SEPSGPGAPAG) are compositionally biased toward low complexity. Positions 304–376 (GDYYDDELFS…LSSIMIAIPG (73 aa)) are multimerization. 2 interaction with the L polymerase regions span residues 361-377 (STLE…IPGL) and 396-410 (PIIG…AEVL). The x domain (XD) stretch occupies residues 457 to 507 (GPASRSVIRSIIKSSRLEEDRKRYLMTLLDDIKGANDLAKFHQMLMKIIMK). The tract at residues 459–507 (ASRSVIRSIIKSSRLEEDRKRYLMTLLDDIKGANDLAKFHQMLMKIIMK) is interaction with the nucleocapsid (N-RNA).

This sequence belongs to the morbillivirus P protein family. In terms of assembly, homotetramer. Interacts (via multimerization domain and XD domain) with polymerase L; this interaction forms the polymerase L-P complex. Interacts (via N-terminus) with N0 (via Ncore); this interaction allows P to chaperon N0 to avoid N polymerization and non-specific RNA binding before encapsidation. Interacts (via C-terminus) with N-RNA template (via Ntail); this interaction maintains the P/L complex anchored to the nucleocapsid template during the sequential transcription. Interacts (via C-terminus) with protein C this interaction allows C to associate with the ribonucleocapsid. Phosphorylation on serines by host CK2 is necessary for the formation of viral factories.

Functionally, essential cofactor of the RNA polymerase L that plays a central role in the transcription and replication by forming the polymerase complex with RNA polymerase L and recruiting L to the genomic N-RNA template for RNA synthesis. Also plays a central role in the encapsidation of nascent RNA chains by forming the encapsidation complex with the nucleocapsid protein N (N-P complex). Acts as a chaperone for newly synthesized free N protein, so-called N0, allowing encapsidation of nascent RNA chains during replication. The nucleoprotein protein N prevents excessive phosphorylation of P, which leads to down-regulation of viral transcription/ replication. Participates, together with N, in the formation of viral factories (viroplasms), which are large inclusions in the host cytoplasm where replication takes place. The protein is Phosphoprotein (P/V) of Measles virus (strain Edmonston) (MeV).